Consider the following 377-residue polypeptide: Nitric oxide reductase FlRd-NAD(+) reductase (377 aa).

Belongs to the FAD-dependent oxidoreductase family. It depends on FAD as a cofactor.

Its subcellular location is the cytoplasm. It catalyses the reaction 2 reduced [nitric oxide reductase rubredoxin domain] + NAD(+) + H(+) = 2 oxidized [nitric oxide reductase rubredoxin domain] + NADH. It participates in nitrogen metabolism; nitric oxide reduction. In terms of biological role, one of at least two accessory proteins for anaerobic nitric oxide (NO) reductase. Reduces the rubredoxin moiety of NO reductase. The chain is Nitric oxide reductase FlRd-NAD(+) reductase from Escherichia fergusonii (strain ATCC 35469 / DSM 13698 / CCUG 18766 / IAM 14443 / JCM 21226 / LMG 7866 / NBRC 102419 / NCTC 12128 / CDC 0568-73).